The sequence spans 354 residues: UPF0421 protein BH2644 (354 aa).

A run of 4 helical transmembrane segments spans residues Ala-22 to Ile-42, Leu-60 to Phe-80, Thr-107 to Ala-127, and Val-133 to Pro-153.

This sequence belongs to the UPF0421 family.

Its subcellular location is the cell membrane. The polypeptide is UPF0421 protein BH2644 (Halalkalibacterium halodurans (strain ATCC BAA-125 / DSM 18197 / FERM 7344 / JCM 9153 / C-125) (Bacillus halodurans)).